The primary structure comprises 837 residues: Tuftelin-interacting protein 11 (837 aa).

Basic and acidic residues-rich tracts occupy residues 1–13 (MSLSHLYRDGEGH) and 44–64 (QTKEEATYGVWAERDSDEERP). 3 disordered regions span residues 1-21 (MSLSHLYRDGEGHLDDDDDER), 34-73 (EFNPNRQRHWQTKEEATYGVWAERDSDEERPSFGGKRARD), and 85-135 (LKKG…FAGG). The required for interaction with DHX15 stretch occupies residues 1–50 (MSLSHLYRDGEGHLDDDDDERENFEITDWDLQNEFNPNRQRHWQTKEEAT). Residues Ser-2, Ser-59, Ser-95, and Ser-98 each carry the phosphoserine modification. The segment covering 91 to 100 (EEADSEDSDA) has biased composition (acidic residues). A compositionally biased stretch (basic and acidic residues) spans 101–116 (EEKPVKQEDFPKDLGP). Ser-144 bears the Phosphoserine mark. One can recognise a G-patch domain in the interval 149 to 195 (TKGIGQKLLQKMGYVPGRGLGKNAQGIINPIEAKQRKGKGAVGAYGS). Residues 183 to 236 (QRKGKGAVGAYGSERTTQSLQDFPVADSEEEAEEEFQKELSQWRKDPSGSKKKP) form a disordered region. Ser-210 bears the Phosphoserine mark. Basic and acidic residues predominate over residues 217-231 (EFQKELSQWRKDPSG). Residues 700–705 (VKDKFN) carry the Nuclear localization signal motif. Positions 710–734 (IMNRAVSSNVGAYMQPGARENIAYL) are required for nuclear speckle localization.

This sequence belongs to the TFP11/STIP family. Identified in the spliceosome C complex. Found in the Intron Large (IL) complex, a post-mRNA release spliceosomal complex containing the excised intron, U2, U5 and U6 snRNPs, and splicing factors. Interacts with TUFT1. Interacts with DHX15; indicative for a recruitment of DHX15 to the IL complex. Interacts with GCFC2.

The protein localises to the cytoplasm. The protein resides in the nucleus. Involved in pre-mRNA splicing, specifically in spliceosome disassembly during late-stage splicing events. Intron turnover seems to proceed through reactions in two lariat-intron associated complexes termed Intron Large (IL) and Intron Small (IS). In cooperation with DHX15 seems to mediate the transition of the U2, U5 and U6 snRNP-containing IL complex to the snRNP-free IS complex leading to efficient debranching and turnover of excised introns. May play a role in the differentiation of ameloblasts and odontoblasts or in the forming of the enamel extracellular matrix. The sequence is that of Tuftelin-interacting protein 11 (Tfip11) from Rattus norvegicus (Rat).